A 159-amino-acid polypeptide reads, in one-letter code: Ribosomal RNA large subunit methyltransferase H (159 aa).

Leu76 and Gly108 together coordinate S-adenosyl-L-methionine.

Belongs to the RNA methyltransferase RlmH family. In terms of assembly, homodimer.

Its subcellular location is the cytoplasm. The catalysed reaction is pseudouridine(1915) in 23S rRNA + S-adenosyl-L-methionine = N(3)-methylpseudouridine(1915) in 23S rRNA + S-adenosyl-L-homocysteine + H(+). Its function is as follows. Specifically methylates the pseudouridine at position 1915 (m3Psi1915) in 23S rRNA. This chain is Ribosomal RNA large subunit methyltransferase H, found in Ligilactobacillus salivarius (strain UCC118) (Lactobacillus salivarius).